Here is an 82-residue protein sequence, read N- to C-terminus: Hepcidin (82 aa).

A signal peptide spans 1–23; that stretch reads MALSVQIRAACLLLLLLVSLTAG. A propeptide spanning residues 24 to 53 is cleaved from the precursor; that stretch reads SVLPSQTRQLTDLRTQDTAGATAGLTPVAQ. 4 disulfide bridges follow: cysteine 64/cysteine 80, cysteine 67/cysteine 70, cysteine 68/cysteine 76, and cysteine 71/cysteine 79.

Belongs to the hepcidin family. In terms of assembly, interacts with SLC40A1; this interaction promotes SLC40A1 rapid ubiquitination.

The protein localises to the secreted. In terms of biological role, liver-produced hormone that constitutes the main circulating regulator of iron absorption and distribution across tissues. Acts by promoting endocytosis and degradation of ferroportin/SLC40A1, leading to the retention of iron in iron-exporting cells and decreased flow of iron into plasma. Controls the major flows of iron into plasma: absorption of dietary iron in the intestine, recycling of iron by macrophages, which phagocytose old erythrocytes and other cells, and mobilization of stored iron from hepatocytes. Its function is as follows. Has strong antimicrobial activity against E.coli ML35P N.cinerea and weaker against S.epidermidis, S.aureus and group b streptococcus bacteria. Active against the fungus C.albicans. No activity against P.aeruginosa. The protein is Hepcidin (HAMP) of Sus scrofa (Pig).